We begin with the raw amino-acid sequence, 469 residues long: Uronate isomerase (469 aa).

The protein belongs to the metallo-dependent hydrolases superfamily. Uronate isomerase family.

The catalysed reaction is D-glucuronate = D-fructuronate. It catalyses the reaction aldehydo-D-galacturonate = keto-D-tagaturonate. Its pathway is carbohydrate metabolism; pentose and glucuronate interconversion. This chain is Uronate isomerase, found in Edwardsiella ictaluri (strain 93-146).